A 309-amino-acid polypeptide reads, in one-letter code: Homoserine kinase (309 aa).

An ATP-binding site is contributed by 85 to 95; sequence PYGLGLGSSGS.

It belongs to the GHMP kinase family. Homoserine kinase subfamily.

The protein resides in the cytoplasm. The enzyme catalyses L-homoserine + ATP = O-phospho-L-homoserine + ADP + H(+). The protein operates within amino-acid biosynthesis; L-threonine biosynthesis; L-threonine from L-aspartate: step 4/5. In terms of biological role, catalyzes the ATP-dependent phosphorylation of L-homoserine to L-homoserine phosphate. The sequence is that of Homoserine kinase from Thermoplasma volcanium (strain ATCC 51530 / DSM 4299 / JCM 9571 / NBRC 15438 / GSS1).